Here is a 311-residue protein sequence, read N- to C-terminus: Putative S-adenosyl-L-methionine-dependent methyltransferase MUL_4761 (311 aa).

Residues D132 and 161-162 each bind S-adenosyl-L-methionine; that span reads DL.

It belongs to the UPF0677 family.

Functionally, exhibits S-adenosyl-L-methionine-dependent methyltransferase activity. This chain is Putative S-adenosyl-L-methionine-dependent methyltransferase MUL_4761, found in Mycobacterium ulcerans (strain Agy99).